Here is a 367-residue protein sequence, read N- to C-terminus: Porin Omp2a (367 aa).

Residues 1–22 (MNIKSLLLGSAAALVAASGAQA) form the signal peptide.

Belongs to the alphaproteobacteria porin family. In terms of assembly, monomer.

It localises to the cell outer membrane. Its function is as follows. Forms passive diffusion pores that allow small molecular weight hydrophilic materials across the outer membrane. The polypeptide is Porin Omp2a (omp2a) (Brucella canis (strain ATCC 23365 / NCTC 10854 / RM-666)).